The primary structure comprises 169 residues: Calcium-binding protein G (169 aa).

EF-hand domains follow at residues 9 to 44 (KIFQ…KMNG), 60 to 83 (VDMD…QAKK), 92 to 127 (AALA…QGYN), and 133 to 162 (DYVL…KRLA). Residues aspartate 105, aspartate 107, aspartate 109, lysine 111, glutamate 116, aspartate 140, aspartate 142, aspartate 144, tyrosine 146, and glutamate 151 each coordinate Ca(2+).

In Dictyostelium discoideum (Social amoeba), this protein is Calcium-binding protein G (cbpG).